The sequence spans 358 residues: Alanine racemase (358 aa).

Lys35 functions as the Proton acceptor; specific for D-alanine in the catalytic mechanism. At Lys35 the chain carries N6-(pyridoxal phosphate)lysine. Substrate is bound at residue Arg130. Catalysis depends on Tyr255, which acts as the Proton acceptor; specific for L-alanine. Met303 contacts substrate.

This sequence belongs to the alanine racemase family. It depends on pyridoxal 5'-phosphate as a cofactor.

The catalysed reaction is L-alanine = D-alanine. It participates in amino-acid biosynthesis; D-alanine biosynthesis; D-alanine from L-alanine: step 1/1. Catalyzes the interconversion of L-alanine and D-alanine. May also act on other amino acids. This Shewanella loihica (strain ATCC BAA-1088 / PV-4) protein is Alanine racemase (alr).